The following is a 74-amino-acid chain: MYKKMLKKAIKNADRHYEDACNLPYETVDESKIQWTELKEKDLKRIEEEKKIIETINQIQKKYIHTVQQQNTNI.

This is an uncharacterized protein from Invertebrate iridescent virus 6 (IIV-6).